The sequence spans 1403 residues: MAEHGESSEDRISEIDYEFLPELSALLGVDAFQVAKSQEEEEHKERMKMKKGFNSQMRSEAKRLKTFETYDTFRSWTPQEMAAAGFYHTGVRLGVQCFCCSLILFGNSLRKLPIERHKKLRPECEFLQGKDVGNIGKYDIRVKRPEKMLRGGKARYHEEEARLESFEDWPFYAHGTSPRVLSAAGFVFTGKRDTVQCFSCGGSLGNWEEGDDPWKEHAKWFPKCEFLQSKKSSEEIAQYIQSYEGFVHVTGEHFVKSWVRRELPMVSAYCNDSVFANEELRMDMFKDWPQESPVGVEALVRAGFFYTGKKDIVRCFSCGGCLEKWAEGDDPMEDHIKFFPECVFLQTLKSSAEVIPTLQSQYALPEATETTRESNHGDAAAVHSTVVDLGRSEAQWFQEARSLSEQLRDNYTKATFRHMNLPEVCSSLGTDHLLSCDVSIISKHISQPVQEALTIPEVFSNLNSVMCVEGETGSGKTTFLKRIAFLWASGCCPLLYRFQLVFYLSLSSITPDQGLANIICAQLLGAGGCISEVCLSSSIQQLQHQVLFLLDDYSGLASLPQALHTLITKNYLSRTCLLIAVHTNRVRDIRLYLGTSLEIQEFPFYNTVSVLRKFFSHDIICVEKLIIYFIDNKDLQGVYKTPLFVAAVCTDWIQNASAQDKFQDVTLFQSYMQYLSLKYKATAEPLQATVSSCGQLALTGLFSSCFEFNSDDLAEAGVDEDEKLTTLLMSKFTAQRLRPVYRFLGPLFQEFLAAVRLTELLSSDRQEDQDLGLYYLRQIDSPLKAINSFNIFLYYVSSHSSSKAAPTVVSHLLQLVDEKESLENMSENEDYMKLHPQTFLWFQFVRGLWLVSPESSSSFVSEHLLRLALIFAYESNTVAECSPFILQFLRGKTLALRVLNLQYFRDHPESLLLLRSLKVSINGNKMSSYVDYSFKTYFENLQPPAIDEEYTSAFEHISEWRRNFAQDEEIIKNYENIRPRALPDISEGYWKLSPKPCKIPKLEVQVNNTDAADQALLQVLMEVFSASQSIEFRLFNSSGFLESICPALELSKASVTKCSMSRLELSRAEQELLLTLPALQSLEVSETNQLPEQLFHNLHKFLGLKELCVRLDGKPNVLSVLPREFPNLLHMEKLSIQTSTESDLSKLVKFIQNFPNLHVFHLKCDFLSNCESLMAVLASCKKLREIEFSGRCFEAMTFVNILPNFVSLKILNLKDQQFPDKETSEKFAQALGSLRNLEELLVPTGDGIHQVAKLIVRQCLQLPCLRVLTFHDILDDDSVIEIARAATSGGFQKLENLDISMNHKITEEGYRNFFQALDNLPNLQELNICRNIPGRIQVQATTVKALGQCVSRLPSLIRLHMLSWLLDEEDMKVINDVKERHPQSKRLIIFWKLIVPFSPVILE.

BIR repeat units lie at residues 60-127 (EAKR…CEFL), 159-227 (EEAR…CEFL), and 278-345 (EELR…CVFL). Positions 315, 318, 335, and 342 each coordinate Zn(2+). One can recognise an NACHT domain in the interval 464–759 (SVMCVEGETG…EFLAAVRLTE (296 aa)). Position 473 to 478 (473 to 478 (GSGKTT)) interacts with ATP.

Component of the NLRC4 inflammasome, at least composed of NLRC4, caspase-1 (CASP1) and some NAIP protein. Flagellin binding by NAIP5 triggers assembly of the inflammasome, a huge complex that contains a single NAIP5 chain and multiple copies of NLRC4. In terms of assembly, (Microbial infection) Interacts with S.typhimurium (Salmonella) flagellin. As to quaternary structure, (Microbial infection) Interacts with L.pneumophila flagellin. In terms of tissue distribution, detected in macrophages (at protein level).

Functionally, sensor component of the NLRC4 inflammasome that specifically recognizes and binds flagellin from pathogenic bacteria such as Legionella or Salmonella. Association of pathogenic bacteria proteins drives in turn drive assembly and activation of the NLRC4 inflammasome, promoting caspase-1 activation, cytokine production and macrophage pyroptosis. The NLRC4 inflammasome is activated as part of the innate immune response to a range of intracellular bacteria. The NLRC4 inflammasome senses Gram-negative bacteria such as L.pneumophila and P.aeruginosa, enteric pathogens S.typhimurium (Salmonella) and S.flexneri. May contribute to prevent motor-neuron apoptosis induced by a variety of signals. In Mus musculus (Mouse), this protein is Baculoviral IAP repeat-containing protein 1e.